We begin with the raw amino-acid sequence, 287 residues long: Nucleotide-binding protein HEAR2885 (287 aa).

An ATP-binding site is contributed by Gly8 to Ser15. GTP is bound at residue Asp57–Ser60.

Belongs to the RapZ-like family.

Displays ATPase and GTPase activities. The chain is Nucleotide-binding protein HEAR2885 from Herminiimonas arsenicoxydans.